Here is a 95-residue protein sequence, read N- to C-terminus: Blastocyst protein 4 (95 aa).

Residues 1–20 form the signal peptide; the sequence is MGAVFAIIGGFALDSPILRL.

This chain is Blastocyst protein 4, found in Oryctolagus cuniculus (Rabbit).